Reading from the N-terminus, the 106-residue chain is MNDSEFHRLADQLWLTIEERLDDWDGDSDIDCEINGGVLTITFENGSKIIINRQEPLHQVWLATKQGGYHFDLKGDEWICDRSGETFRDLLEQAATQQAGETVSFR.

It belongs to the frataxin family. As to quaternary structure, interacts with IscS. Certain pairs of proteins can bind simultaneously to IscS; IscS-IscU-CyaY complexes can be isolated in vitro, but (IscS-TusA-CyaY) complexes cannot.

In terms of biological role, involved in iron-sulfur (Fe-S) cluster assembly. May act as a regulator of Fe-S biogenesis. This chain is Iron-sulfur cluster assembly protein CyaY, found in Escherichia coli O157:H7.